We begin with the raw amino-acid sequence, 464 residues long: mRNA capping enzyme LEF-4 (464 aa).

An mRNA triphosphatase region spans residues 1–204; sequence MDYGDFVIEK…NVMCNIIADM (204 aa). The segment at 205–464 is mRNA guanylyltransferase; the sequence is EALTDAQNIS…KHRRDRIVPN (260 aa). Catalysis depends on Lys-255, which acts as the N6-GMP-lysine intermediate.

This sequence belongs to the baculoviridae LEF-4 family. As to quaternary structure, interacts with LEF-8, LEF-9, and p47.

It is found in the host cytoplasm. Its subcellular location is the host nucleus. The catalysed reaction is a 5'-end diphospho-ribonucleoside in mRNA + GTP + H(+) = a 5'-end (5'-triphosphoguanosine)-ribonucleoside in mRNA + diphosphate. It catalyses the reaction a 5'-end triphospho-ribonucleoside in mRNA + H2O = a 5'-end diphospho-ribonucleoside in mRNA + phosphate + H(+). Its function is as follows. Component of the viral DNA-dependent RNA polymerase that catalyzes two reactions involved in viral RNA cap formation: an RNA 5'-triphosphatase that hydrolyzes the gamma phosphate of triphosphate-terminated RNA and a guanylyltransferase that reacts with GTP to form a covalent protein-guanylate adduct. Therefore plays an essential role in late and very late gene expression. This chain is mRNA capping enzyme LEF-4 (LEF-4), found in Autographa californica nuclear polyhedrosis virus (AcMNPV).